The sequence spans 513 residues: Zinc finger CCCH-type with G patch domain-containing protein (513 aa).

A C3H1-type zinc finger spans residues 155 to 178; it reads PCSYYLEGECRFDEAKCRFSHGAL. 2 stretches are compositionally biased toward acidic residues: residues 252 to 261 and 273 to 283; these read DQDEDDELSS and SDEAESDMDDL. The tract at residues 252 to 283 is disordered; the sequence is DQDEDDELSSEESTSSMRDASSDEAESDMDDL. The G-patch domain occupies 312-358; sequence TRGIGSKLMEKMGYIHGTGLGSEGRGIVTPVSAQILPQGRSLDACME. Disordered regions lie at residues 411 to 430 and 477 to 513; these read PGESTQQSEQVAKKAKNNEL and QVQMQSHKQELATLQAQERSLSKEQQTRKSKNKMFEF. A compositionally biased stretch (polar residues) spans 477–495; the sequence is QVQMQSHKQELATLQAQER. A compositionally biased stretch (basic and acidic residues) spans 496 to 513; it reads SLSKEQQTRKSKNKMFEF.

The protein resides in the nucleus. In terms of biological role, transcription repressor. The chain is Zinc finger CCCH-type with G patch domain-containing protein from Drosophila sechellia (Fruit fly).